The primary structure comprises 534 residues: CTP synthase (534 aa).

Residues 1-267 form an amidoligase domain region; the sequence is MSKYIVVTGG…GSYILNRLNI (267 aa). Serine 13 is a CTP binding site. Serine 13 contacts UTP. Position 14–19 (14–19) interacts with ATP; that stretch reads SIGKGI. Tyrosine 54 lines the L-glutamine pocket. Residue aspartate 71 coordinates ATP. Residues aspartate 71 and glutamate 141 each coordinate Mg(2+). CTP is bound by residues 148-150, 188-193, and lysine 224; these read DIE and KTKPTQ. Residues 188-193 and lysine 224 each bind UTP; that span reads KTKPTQ. The region spanning 294 to 532 is the Glutamine amidotransferase type-1 domain; the sequence is KIAVVGKYIE…IKAAKNKKQN (239 aa). Glycine 353 contacts L-glutamine. Cysteine 380 serves as the catalytic Nucleophile; for glutamine hydrolysis. Residues 381 to 384, glutamate 403, and arginine 460 contribute to the L-glutamine site; that span reads LGLH. Active-site residues include histidine 505 and glutamate 507.

The protein belongs to the CTP synthase family. In terms of assembly, homotetramer.

It carries out the reaction UTP + L-glutamine + ATP + H2O = CTP + L-glutamate + ADP + phosphate + 2 H(+). The catalysed reaction is L-glutamine + H2O = L-glutamate + NH4(+). The enzyme catalyses UTP + NH4(+) + ATP = CTP + ADP + phosphate + 2 H(+). Its pathway is pyrimidine metabolism; CTP biosynthesis via de novo pathway; CTP from UDP: step 2/2. With respect to regulation, allosterically activated by GTP, when glutamine is the substrate; GTP has no effect on the reaction when ammonia is the substrate. The allosteric effector GTP functions by stabilizing the protein conformation that binds the tetrahedral intermediate(s) formed during glutamine hydrolysis. Inhibited by the product CTP, via allosteric rather than competitive inhibition. Functionally, catalyzes the ATP-dependent amination of UTP to CTP with either L-glutamine or ammonia as the source of nitrogen. Regulates intracellular CTP levels through interactions with the four ribonucleotide triphosphates. The protein is CTP synthase of Methanosphaera stadtmanae (strain ATCC 43021 / DSM 3091 / JCM 11832 / MCB-3).